A 407-amino-acid chain; its full sequence is Phosphopentomutase (407 aa).

Asp-10, Asp-307, His-312, Asp-348, His-349, and His-360 together coordinate Mn(2+).

This sequence belongs to the phosphopentomutase family. Requires Mn(2+) as cofactor.

The protein localises to the cytoplasm. It carries out the reaction 2-deoxy-alpha-D-ribose 1-phosphate = 2-deoxy-D-ribose 5-phosphate. The catalysed reaction is alpha-D-ribose 1-phosphate = D-ribose 5-phosphate. Its pathway is carbohydrate degradation; 2-deoxy-D-ribose 1-phosphate degradation; D-glyceraldehyde 3-phosphate and acetaldehyde from 2-deoxy-alpha-D-ribose 1-phosphate: step 1/2. Isomerase that catalyzes the conversion of deoxy-ribose 1-phosphate (dRib-1-P) and ribose 1-phosphate (Rib-1-P) to deoxy-ribose 5-phosphate (dRib-5-P) and ribose 5-phosphate (Rib-5-P), respectively. This Methylobacterium nodulans (strain LMG 21967 / CNCM I-2342 / ORS 2060) protein is Phosphopentomutase.